Consider the following 148-residue polypeptide: MASKRILKELKDLQKDPPTSCSAGPVAEDMFHWQATIMGPTDSPYAGGVFLVSIHFPPDYPFKPPKVAFRTKVFHPNINSNGSICLDILKEQWSPALTISKVLLSICSLLTDPNPDDPLVPEIAHMYKTDRAKYETTARSWTQKYAMG.

A UBC core domain is found at 1–147 (MASKRILKEL…ARSWTQKYAM (147 aa)). The active-site Glycyl thioester intermediate is Cys85.

It belongs to the ubiquitin-conjugating enzyme family.

The enzyme catalyses S-ubiquitinyl-[E1 ubiquitin-activating enzyme]-L-cysteine + [E2 ubiquitin-conjugating enzyme]-L-cysteine = [E1 ubiquitin-activating enzyme]-L-cysteine + S-ubiquitinyl-[E2 ubiquitin-conjugating enzyme]-L-cysteine.. It participates in protein modification; protein ubiquitination. Its function is as follows. Catalyzes the covalent attachment of ubiquitin to other proteins. Mediates the selective degradation of short-lived and abnormal proteins. In Solanum lycopersicum (Tomato), this protein is Ubiquitin-conjugating enzyme E2-17 kDa.